Consider the following 501-residue polypeptide: Eukaryotic translation initiation factor 3 subunit E (501 aa).

The 179-residue stretch at 245 to 423 (CDLFFYTPYL…ESIESTSTNV (179 aa)) folds into the PCI domain. Phosphoserine occurs at positions 477 and 479.

It belongs to the eIF-3 subunit E family. In terms of assembly, component of the eukaryotic translation initiation factor 3 (eIF-3) complex. The eIF-3 complex appears to include tif32/eif3a, SPAC25G10.08/eif3b, tif33/eif3c, SPBC4C3.07/eif3f, tif35/eif3g and sum1/eif3i. This set of common subunits may also associate exclusively with either moe1/eif3d and int6/eif3e, or with SPAC821.05/eif3h and SPAC1751.03/eif3m. The eIF-3 complex may also include SPAC3A12.13c/eif3j. Also interacts with the proteasome via rpn501/rpn502.

The protein localises to the cytoplasm. In terms of biological role, component of the eukaryotic translation initiation factor 3 (eIF-3) complex, which is involved in protein synthesis of a specialized repertoire of mRNAs and, together with other initiation factors, stimulates binding of mRNA and methionyl-tRNAi to the 40S ribosome. The eIF-3 complex specifically targets and initiates translation of a subset of mRNAs involved in cell proliferation (Potential). Required for maintaining the basal level of atf1 and for transcriptional activation of core environmental stress response genes (CESR genes) in response to histidine starvation. May positively regulate proteasome activity. Required for nuclear localization of the proteasome subunit rpn501/rpn502. The polypeptide is Eukaryotic translation initiation factor 3 subunit E (int6) (Schizosaccharomyces pombe (strain 972 / ATCC 24843) (Fission yeast)).